Here is a 408-residue protein sequence, read N- to C-terminus: UDP-N-acetylglucosamine--dolichyl-phosphate N-acetylglucosaminephosphotransferase (408 aa).

The Lumenal portion of the chain corresponds to 1–10; that stretch reads MWAFPELPMP. The chain crosses the membrane as a helical span at residues 11 to 38; sequence LLVNLIGSLMGFVATVTLIPAFRGHFIA. The Cytoplasmic portion of the chain corresponds to 39 to 58; that stretch reads ARLCGQDLNKSSREQIPESQ. UDP-N-acetyl-alpha-D-glucosamine-binding positions include 44–46 and Glu56; that span reads QDL. Residues 59–78 traverse the membrane as a helical segment; it reads GVISGAVFLIILFCFIPFPF. The Lumenal segment spans residues 79–91; that stretch reads LNCFVEQQCKAFP. The chain crosses the membrane as a helical span at residues 92–118; sequence HHEFVALIGALLAICCMIFLGFADDVL. At 119-121 the chain is on the cytoplasmic side; it reads NLR. The helical transmembrane segment at 122 to 143 threads the bilayer; it reads WRHKLLLPTAASLPLLMVYFTN. Position 125 (Lys125) interacts with dolichyl phosphate. The Lumenal portion of the chain corresponds to 144–166; sequence FGNTTIVVPKPLRPILGLHLDLG. N-linked (GlcNAc...) asparagine glycosylation occurs at Asn146. A helical membrane pass occupies residues 167 to 186; it reads ILYYVYMGLLAVFCTNAINI. 178–186 provides a ligand contact to dolichyl phosphate; that stretch reads VFCTNAINI. Asn185 is a binding site for Mg(2+). Topologically, residues 187-192 are cytoplasmic; sequence LAGING. Asn191 contributes to the UDP-N-acetyl-alpha-D-glucosamine binding site. A helical transmembrane segment spans residues 193-213; it reads LEAGQSLVISASIIVFNLVEL. Over 214-218 the chain is Lumenal; the sequence is DGDYR. A helical transmembrane segment spans residues 219–242; sequence DDHIFSLYFMIPFFFTTLGLLYHN. Residues 243–250 are Cytoplasmic-facing; that stretch reads WYPSRVFV. Residues 251–269 traverse the membrane as a helical segment; that stretch reads GDTFCYFAGMTFAVVGILG. Position 252 (Asp252) interacts with Mg(2+). Over 270–271 the chain is Lumenal; that stretch reads HF. A helical transmembrane segment spans residues 272–293; the sequence is SKTMLLFFMPQVFNFLYSLPQL. At 294 to 375 the chain is on the cytoplasmic side; sequence LHIIPCPRHR…LLLKVFGPMH (82 aa). 301–303 contacts UDP-N-acetyl-alpha-D-glucosamine; sequence RHR. Residues 376–400 traverse the membrane as a helical segment; sequence ERNLTLLLLLLQVVGSAVTFSIRYQ. Residues 401–408 are Lumenal-facing; that stretch reads LVRLFYDV.

The protein belongs to the glycosyltransferase 4 family. Homodimer. Mg(2+) is required as a cofactor.

It is found in the endoplasmic reticulum membrane. It carries out the reaction a di-trans,poly-cis-dolichyl phosphate + UDP-N-acetyl-alpha-D-glucosamine = an N-acetyl-alpha-D-glucosaminyl-diphospho-di-trans,poly-cis-dolichol + UMP. It functions in the pathway protein modification; protein glycosylation. Its activity is regulated as follows. Inhibited by natural nucleoside antibiotic tunicamycin, which acts as a structural analog and competitor of UDP-GlcNAc. Activated by Man-P-Dol. Activated by manganese. Inhibited by diumycin. Functionally, UDP-N-acetylglucosamine--dolichyl-phosphate N-acetylglucosaminephosphotransferase that operates in the biosynthetic pathway of dolichol-linked oligosaccharides, the glycan precursors employed in protein asparagine (N)-glycosylation. The assembly of dolichol-linked oligosaccharides begins on the cytosolic side of the endoplasmic reticulum membrane and finishes in its lumen. The sequential addition of sugars to dolichol pyrophosphate produces dolichol-linked oligosaccharides containing fourteen sugars, including two GlcNAcs, nine mannoses and three glucoses. Once assembled, the oligosaccharide is transferred from the lipid to nascent proteins by oligosaccharyltransferases. Catalyzes the initial step of dolichol-linked oligosaccharide biosynthesis, transfering GlcNAc-1-P from cytosolic UDP-GlcNAc onto the carrier lipid dolichyl phosphate (P-dolichol), yielding GlcNAc-P-P-dolichol embedded in the cytoplasmic leaflet of the endoplasmic reticulum membrane. The protein is UDP-N-acetylglucosamine--dolichyl-phosphate N-acetylglucosaminephosphotransferase of Bos taurus (Bovine).